A 423-amino-acid chain; its full sequence is Guanine nucleotide-binding protein subunit beta (423 aa).

WD repeat units follow at residues 90-120 (GHNNKISDFRWSRDSKRILSASQDGFMLIWD), 132-162 (LDSQWVLSCAISPSSTLVASAGLNNNCTIYR), 179-208 (GHTCYISDIEFTDNAHILTASGDMTCALWD), 220-256 (DHLGDVLALAIPEEPNSENSSNTFASCGSDGYTYIWD), 268-298 (VNDSDINALRFFKDGMSIVAGSDNGAINMYD), 348-377 (DNQGVVSLDFSASGRLMYSCYTDIGCVVWD), and 389-419 (GHGGRVTGVRSSPDGLAVCTGSWDSTMKIWS).

Belongs to the WD repeat G protein beta family. As to quaternary structure, g proteins are composed of 3 units, alpha, beta and gamma. The beta-gamma subunit complex (STE4-STE18 complex) interacts with PLP1 and PLP2. Interacts with SYG1.

In terms of biological role, implicated in the a- and alpha-factor response pathway. The beta and gamma chains of the putative yeast mating response pathway G protein play a positive role in initiation of the mating response. The beta and gamma chains are required for the GTPase activity, for replacement of GDP by GTP, and for G protein-effector interaction. The chain is Guanine nucleotide-binding protein subunit beta (STE4) from Saccharomyces cerevisiae (strain ATCC 204508 / S288c) (Baker's yeast).